The chain runs to 440 residues: Thymidine phosphorylase (440 aa).

It belongs to the thymidine/pyrimidine-nucleoside phosphorylase family. In terms of assembly, homodimer.

The enzyme catalyses thymidine + phosphate = 2-deoxy-alpha-D-ribose 1-phosphate + thymine. It participates in pyrimidine metabolism; dTMP biosynthesis via salvage pathway; dTMP from thymine: step 1/2. The enzymes which catalyze the reversible phosphorolysis of pyrimidine nucleosides are involved in the degradation of these compounds and in their utilization as carbon and energy sources, or in the rescue of pyrimidine bases for nucleotide synthesis. In Enterobacter sp. (strain 638), this protein is Thymidine phosphorylase.